Consider the following 425-residue polypeptide: Serine--tRNA ligase (425 aa).

Residue 233–235 (TAE) participates in L-serine binding. 264 to 266 (RRE) contributes to the ATP binding site. Position 287 (Glu287) interacts with L-serine. 351–354 (EISS) lines the ATP pocket. Ser387 contributes to the L-serine binding site.

It belongs to the class-II aminoacyl-tRNA synthetase family. Type-1 seryl-tRNA synthetase subfamily. Homodimer. The tRNA molecule binds across the dimer.

It is found in the cytoplasm. It catalyses the reaction tRNA(Ser) + L-serine + ATP = L-seryl-tRNA(Ser) + AMP + diphosphate + H(+). The enzyme catalyses tRNA(Sec) + L-serine + ATP = L-seryl-tRNA(Sec) + AMP + diphosphate + H(+). It participates in aminoacyl-tRNA biosynthesis; selenocysteinyl-tRNA(Sec) biosynthesis; L-seryl-tRNA(Sec) from L-serine and tRNA(Sec): step 1/1. Functionally, catalyzes the attachment of serine to tRNA(Ser). Is also able to aminoacylate tRNA(Sec) with serine, to form the misacylated tRNA L-seryl-tRNA(Sec), which will be further converted into selenocysteinyl-tRNA(Sec). This Thermotoga petrophila (strain ATCC BAA-488 / DSM 13995 / JCM 10881 / RKU-1) protein is Serine--tRNA ligase.